Here is a 121-residue protein sequence, read N- to C-terminus: Fluoride-specific ion channel FluC 2 (121 aa).

Helical transmembrane passes span 3–23 (YLFV…LSTL), 27–47 (SGLP…MGYL), 64–84 (GVTT…FELV), and 92–112 (IALL…FCWF). Na(+) contacts are provided by G71 and T74.

Belongs to the fluoride channel Fluc/FEX (TC 1.A.43) family.

The protein localises to the cell membrane. The enzyme catalyses fluoride(in) = fluoride(out). With respect to regulation, na(+) is not transported, but it plays an essential structural role and its presence is essential for fluoride channel function. Functionally, fluoride-specific ion channel. Important for reducing fluoride concentration in the cell, thus reducing its toxicity. The chain is Fluoride-specific ion channel FluC 2 from Staphylococcus haemolyticus (strain JCSC1435).